We begin with the raw amino-acid sequence, 106 residues long: Probable NADP-dependent dehydrogenase in aabA 3'region (106 aa).

Position 4 to 28 (4 to 28 (LITGASSGFGWEAAKLCVAKGHRVI)) interacts with NADP(+).

It belongs to the short-chain dehydrogenases/reductases (SDR) family.

The protein is Probable NADP-dependent dehydrogenase in aabA 3'region of Dichelobacter nodosus (Bacteroides nodosus).